Reading from the N-terminus, the 380-residue chain is Cytochrome b (380 aa).

4 helical membrane-spanning segments follow: residues 33–53 (FGSL…FLAM), 77–98 (WLIR…YLHV), 113–133 (WNIG…GYVL), and 178–198 (FFAF…IHLL). Residues H83 and H97 each contribute to the heme b site. Heme b contacts are provided by H182 and H196. Residue H201 participates in a ubiquinone binding. Transmembrane regions (helical) follow at residues 226–246 (YKDM…TLFT), 288–308 (LGGV…PILH), 320–340 (ITQM…WIGG), and 347–367 (FMTI…ILIP).

Belongs to the cytochrome b family. As to quaternary structure, the cytochrome bc1 complex contains 3 respiratory subunits (MT-CYB, CYC1 and UQCRFS1), 2 core proteins (UQCRC1 and UQCRC2) and probably 6 low-molecular weight proteins. Heme b is required as a cofactor.

It is found in the mitochondrion inner membrane. In terms of biological role, component of the ubiquinol-cytochrome c reductase complex (complex III or cytochrome b-c1 complex) that is part of the mitochondrial respiratory chain. The b-c1 complex mediates electron transfer from ubiquinol to cytochrome c. Contributes to the generation of a proton gradient across the mitochondrial membrane that is then used for ATP synthesis. The chain is Cytochrome b (mt-cyb) from Latimeria chalumnae (Coelacanth).